The sequence spans 430 residues: Serine--tRNA ligase (430 aa).

The disordered stretch occupies residues 103-127 (LPNIPDDDVPDGRDENDNQEVSRWG). Position 237-239 (237-239 (TAE)) interacts with L-serine. Position 268 to 270 (268 to 270 (RSE)) interacts with ATP. Glu-291 provides a ligand contact to L-serine. 355-358 (EISS) serves as a coordination point for ATP. Ser-391 lines the L-serine pocket.

This sequence belongs to the class-II aminoacyl-tRNA synthetase family. Type-1 seryl-tRNA synthetase subfamily. Homodimer. The tRNA molecule binds across the dimer.

Its subcellular location is the cytoplasm. The catalysed reaction is tRNA(Ser) + L-serine + ATP = L-seryl-tRNA(Ser) + AMP + diphosphate + H(+). It catalyses the reaction tRNA(Sec) + L-serine + ATP = L-seryl-tRNA(Sec) + AMP + diphosphate + H(+). Its pathway is aminoacyl-tRNA biosynthesis; selenocysteinyl-tRNA(Sec) biosynthesis; L-seryl-tRNA(Sec) from L-serine and tRNA(Sec): step 1/1. In terms of biological role, catalyzes the attachment of serine to tRNA(Ser). Is also able to aminoacylate tRNA(Sec) with serine, to form the misacylated tRNA L-seryl-tRNA(Sec), which will be further converted into selenocysteinyl-tRNA(Sec). The chain is Serine--tRNA ligase from Sodalis glossinidius (strain morsitans).